The following is a 340-amino-acid chain: Deubiquitinase SseL (340 aa).

The active site involves His-223. Cys-285 functions as the Nucleophile in the catalytic mechanism.

The protein belongs to the peptidase C79 family.

The protein localises to the secreted. The protein resides in the host cytoplasm. Functionally, effector proteins function to alter host cell physiology and promote bacterial survival in host tissues. This protease targets the host cell ubiquitin pathway by acting as a deubiquitinase in infected host cells. This is Deubiquitinase SseL (sseL) from Salmonella paratyphi A (strain ATCC 9150 / SARB42).